Reading from the N-terminus, the 253-residue chain is Nurim homolog (253 aa).

At 1–2 (MT) the chain is on the nuclear side. A helical transmembrane segment spans residues 3–30 (SIAKSIVLLASLATFAYSLYVVGSLMMF). At 31-56 (LSTPRSISKAHTWIFNLLDNKSRLQT) the chain is on the perinuclear space side. A helical transmembrane segment spans residues 57–78 (AYGPVVFDTLYLIGFIFQHSFL). The Nuclear segment spans residues 79–96 (KSAVVKKLLAKLGLSGAE). Residues 97-113 (RTIYSLTSSLCLHYLIV) form a helical membrane-spanning segment. Topologically, residues 114–132 (NWLPAQSIVLWQIDVEQSA) are perinuclear space. A helical membrane pass occupies residues 133 to 161 (PLWWTFVITHGICWVVIFGGSLVMDLPEL). The Nuclear portion of the chain corresponds to 162–188 (LGVKQAYYDLKAYGPPISYKSGELRNL). A helical membrane pass occupies residues 189 to 207 (YAHVRHPSFVGLSVILFAT). At 208–213 (NVMSVD) the chain is on the perinuclear space side. Residues 214-231 (RLVMALLLTTYMYLAWST) traverse the membrane as a helical segment. At 232–253 (DQKDVAYQKIQLQRKKLELKAK) the chain is on the nuclear side.

It belongs to the nurim family.

It is found in the nucleus inner membrane. This chain is Nurim homolog (nrm), found in Drosophila melanogaster (Fruit fly).